Consider the following 362-residue polypeptide: Protein-glutamate methylesterase/protein-glutamine glutaminase 5 (362 aa).

The Response regulatory domain occupies 13–130 (RVLVVDDSAL…RRFLEESRVR (118 aa)). Aspartate 64 is subject to 4-aspartylphosphate. In terms of domain architecture, CheB-type methylesterase spans 172–362 (LQTTERVVVV…IPPELLRLCR (191 aa)). Catalysis depends on residues serine 184, histidine 210, and aspartate 306.

It belongs to the CheB family. Post-translationally, phosphorylated by CheA. Phosphorylation of the N-terminal regulatory domain activates the methylesterase activity.

The protein resides in the cytoplasm. The catalysed reaction is [protein]-L-glutamate 5-O-methyl ester + H2O = L-glutamyl-[protein] + methanol + H(+). The enzyme catalyses L-glutaminyl-[protein] + H2O = L-glutamyl-[protein] + NH4(+). Its function is as follows. Involved in chemotaxis. Part of a chemotaxis signal transduction system that modulates chemotaxis in response to various stimuli. Catalyzes the demethylation of specific methylglutamate residues introduced into the chemoreceptors (methyl-accepting chemotaxis proteins or MCP) by CheR. Also mediates the irreversible deamidation of specific glutamine residues to glutamic acid. The polypeptide is Protein-glutamate methylesterase/protein-glutamine glutaminase 5 (Anaeromyxobacter dehalogenans (strain 2CP-C)).